The chain runs to 99 residues: Signal recognition particle 19 kDa protein (99 aa).

Belongs to the SRP19 family. Part of the signal recognition particle protein translocation system, which is composed of SRP and FtsY. Archaeal SRP consists of a 7S RNA molecule of 300 nucleotides and two protein subunits: SRP54 and SRP19.

The protein resides in the cytoplasm. Its function is as follows. Involved in targeting and insertion of nascent membrane proteins into the cytoplasmic membrane. Binds directly to 7S RNA and mediates binding of the 54 kDa subunit of the SRP. In Ignicoccus hospitalis (strain KIN4/I / DSM 18386 / JCM 14125), this protein is Signal recognition particle 19 kDa protein.